The chain runs to 95 residues: Ferredoxin-like protein FixX (95 aa).

The protein belongs to the bacterial-type ferredoxin family. FixX subfamily.

Functionally, could be part of an electron transfer system required for anaerobic carnitine reduction. Could be a 3Fe-4S cluster-containing protein. The polypeptide is Ferredoxin-like protein FixX (fixX) (Salmonella typhimurium (strain LT2 / SGSC1412 / ATCC 700720)).